We begin with the raw amino-acid sequence, 470 residues long: Serine--tRNA ligase (470 aa).

272–274 (TAE) lines the L-serine pocket. ATP is bound at residue 303–305 (RAE). Position 326 (Glu-326) interacts with L-serine. 393 to 396 (EISS) is a binding site for ATP. Ser-428 contacts L-serine.

Belongs to the class-II aminoacyl-tRNA synthetase family. Type-1 seryl-tRNA synthetase subfamily. Homodimer. The tRNA molecule binds across the dimer.

It is found in the cytoplasm. The enzyme catalyses tRNA(Ser) + L-serine + ATP = L-seryl-tRNA(Ser) + AMP + diphosphate + H(+). The catalysed reaction is tRNA(Sec) + L-serine + ATP = L-seryl-tRNA(Sec) + AMP + diphosphate + H(+). It functions in the pathway aminoacyl-tRNA biosynthesis; selenocysteinyl-tRNA(Sec) biosynthesis; L-seryl-tRNA(Sec) from L-serine and tRNA(Sec): step 1/1. Its function is as follows. Catalyzes the attachment of serine to tRNA(Ser). Is also able to aminoacylate tRNA(Sec) with serine, to form the misacylated tRNA L-seryl-tRNA(Sec), which will be further converted into selenocysteinyl-tRNA(Sec). This chain is Serine--tRNA ligase, found in Nitrobacter hamburgensis (strain DSM 10229 / NCIMB 13809 / X14).